The chain runs to 100 residues: Small ribosomal subunit protein uS14c (100 aa).

It belongs to the universal ribosomal protein uS14 family. Part of the 30S ribosomal subunit.

The protein resides in the plastid. It is found in the chloroplast. Its function is as follows. Binds 16S rRNA, required for the assembly of 30S particles. This is Small ribosomal subunit protein uS14c from Chaetosphaeridium globosum (Charophycean green alga).